The sequence spans 521 residues: Hyccin (521 aa).

Thr306 carries the phosphothreonine modification. Position 321 is a phosphoserine (Ser321). Low complexity predominate over residues 355–373 (AASSTSQSGLSNSSHNCSN). The tract at residues 355–413 (AASSTSQSGLSNSSHNCSNKTSVGKNQRRSGGSKAGAKERETAGESCRDHFARKQTQRA) is disordered. Residues 390-406 (GAKERETAGESCRDHFA) show a composition bias toward basic and acidic residues. Residues Ser415, Ser422, Ser433, Ser453, and Ser465 each carry the phosphoserine modification.

This sequence belongs to the Hyccin family. Component of a phosphatidylinositol 4-kinase (PI4K) complex, composed of PI4KA, EFR3 (EFR3A or EFR3B), TTC7 (TTC7A or TTC7B) and HYCC (HYCC1 or HYCC2). Interacts with TTC7 (TTC7A or TTC7B), interaction is direct. As to expression, predominantly expressed in the central nervous system, where it is found in neurons but not in myelinating cells. Lower abundance is observed in peripheral neurons, where it is detectable only at early postnatal ages. Expressed in both oligodendrocytes and neurons.

It localises to the cytoplasm. The protein resides in the cytosol. It is found in the cell membrane. Functionally, component of a complex required to localize phosphatidylinositol 4-kinase (PI4K) to the plasma membrane. The complex acts as a regulator of phosphatidylinositol 4-phosphate (PtdIns(4)P) synthesis. HYCC1 plays a key role in oligodendrocytes formation, a cell type with expanded plasma membrane that requires generation of PtdIns(4)P. Its role in oligodendrocytes formation probably explains its importance in myelination of the central and peripheral nervous system. May also have a role in the beta-catenin/Lef signaling pathway. This chain is Hyccin (Hycc1), found in Mus musculus (Mouse).